Reading from the N-terminus, the 275-residue chain is Methyltransferase str2 (275 aa).

The protein belongs to the methyltransferase superfamily. LaeA methyltransferase family.

It participates in mycotoxin biosynthesis. Functionally, methyltransferase; part of the gene cluster that mediates the biosynthesis of strobilurin A, an antifungal polyketide that contains a key beta-methoxyacrylate toxophore that targets the complex III of the mitochondrial electron transport chain. Strobilurin biosynthesis begins with construction of benzoyl CoA by step-wise elimination of ammonia from phenylalanine by the phenylalanine ammonia-lyase str11, oxygenation by str8 and retro-Claisen reaction to form benzoic acid, which is activated to its CoA thiolester benzoyl CoA by the dedicated CoA ligase str10. Benzoyl CoA forms the starter unit for the highly reducing polyketide synthase stpks1 that produces the polyketide prestrobilutin A. The FAD-dependent oxygenase str9 then catalyzes the key oxidative rearrangement responsible for the creation of the beta-methoxyacrylate toxophore. Str9 performs epoxidation of the 2,3 olefin of prestrobilutin A, followed by Meinwald rearrangement to furnish the aldehyde intermediate. Rapid enolization of the aldehyde intermediate would give the beta-methoxyacrylate skeleton and methylations catalyzed by str2 and str3 complete the synthesis and lead to the production of strobilurin A. The short-chain dehydrogenase stl2 and the dehydrogenase str4 play a role in the shunt pathway leading to the production of bolineol. The cluster encodes no obvious halogenase gene that could be involved in production of strobilurin B, nor any obvious dimethylallyl-transferase that could be involved in the production of strobilurin G. It is possible that unknown proteins encoded in, or near, the cluster (such as str1 or stl1) may form new classes of halogenases or dimethylally-transferases, or that the responsible genes are located elsewhere on the genome. Similarly, proteins encoded by str5/str6 hydrolases appear to have no chemical role in the biosynthesis of strobilurin A. Finally, no obvious self-resistance gene is found within the cluster. This is Methyltransferase str2 from Strobilurus tenacellus.